A 314-amino-acid chain; its full sequence is Tyrosine recombinase XerC (314 aa).

Residues 1–85 (MNEQVEAFLR…AVKSFFTFLT (85 aa)) enclose the Core-binding (CB) domain. The Tyr recombinase domain occupies 106 to 291 (DLPRALTPRQ…NHESSHTPHA (186 aa)). Residues Arg-147, Lys-171, His-243, Arg-246, and His-269 contribute to the active site. Tyr-278 serves as the catalytic O-(3'-phospho-DNA)-tyrosine intermediate. Residues 284 to 314 (ESSHTPHAHPAPRASEVNGVRDEQALVPEEK) are disordered. Over residues 302 to 314 (GVRDEQALVPEEK) the composition is skewed to basic and acidic residues.

This sequence belongs to the 'phage' integrase family. XerC subfamily. As to quaternary structure, forms a cyclic heterotetrameric complex composed of two molecules of XerC and two molecules of XerD.

The protein resides in the cytoplasm. Site-specific tyrosine recombinase, which acts by catalyzing the cutting and rejoining of the recombining DNA molecules. The XerC-XerD complex is essential to convert dimers of the bacterial chromosome into monomers to permit their segregation at cell division. It also contributes to the segregational stability of plasmids. The protein is Tyrosine recombinase XerC of Roseiflexus castenholzii (strain DSM 13941 / HLO8).